Here is a 100-residue protein sequence, read N- to C-terminus: Urease subunit gamma (100 aa).

It belongs to the urease gamma subunit family. In terms of assembly, heterotrimer of UreA (gamma), UreB (beta) and UreC (alpha) subunits. Three heterotrimers associate to form the active enzyme.

The protein localises to the cytoplasm. It catalyses the reaction urea + 2 H2O + H(+) = hydrogencarbonate + 2 NH4(+). Its pathway is nitrogen metabolism; urea degradation; CO(2) and NH(3) from urea (urease route): step 1/1. The polypeptide is Urease subunit gamma (Leptothrix cholodnii (strain ATCC 51168 / LMG 8142 / SP-6) (Leptothrix discophora (strain SP-6))).